Here is a 249-residue protein sequence, read N- to C-terminus: Ciliogenesis and planar polarity effector 2 (249 aa).

The interval proline 46–glutamate 249 is small GTPase-like. Residues glycine 58 to threonine 65 and threonine 171 to aspartate 174 contribute to the GTP site.

This sequence belongs to the small GTPase superfamily. Rab family. Interacts with fuz.

The protein resides in the cytoplasm. It localises to the cytoskeleton. Its subcellular location is the cilium basal body. Its function is as follows. Potential effector of the planar cell polarity signaling pathway. Plays a role in targeted membrane trafficking most probably at the level of vesicle fusion with membranes. Involved in cilium biogenesis by regulating the transport of cargo proteins to the basal body and to the apical tips of cilia. More generally involved in exocytosis in secretory cells. This chain is Ciliogenesis and planar polarity effector 2, found in Xenopus laevis (African clawed frog).